A 142-amino-acid chain; its full sequence is Small heat shock protein IbpB (142 aa).

A sHSP domain is found at 26-137 (AGESQSFPPY…APQRIAISER (112 aa)).

The protein belongs to the small heat shock protein (HSP20) family. Homodimer. Forms homomultimers of about 100-150 subunits at optimal growth temperatures. Conformation changes to oligomers at high temperatures or high ionic concentrations. The decrease in size of the multimers is accompanied by an increase in chaperone activity.

The protein resides in the cytoplasm. In terms of biological role, associates with aggregated proteins, together with IbpA, to stabilize and protect them from irreversible denaturation and extensive proteolysis during heat shock and oxidative stress. Aggregated proteins bound to the IbpAB complex are more efficiently refolded and reactivated by the ATP-dependent chaperone systems ClpB and DnaK/DnaJ/GrpE. Its activity is ATP-independent. The chain is Small heat shock protein IbpB from Klebsiella pneumoniae subsp. pneumoniae (strain ATCC 700721 / MGH 78578).